A 398-amino-acid polypeptide reads, in one-letter code: Energy-coupling factor transporter ATP-binding protein EcfA2 (398 aa).

Positions 5-240 constitute an ABC transporter domain; sequence IELKDLEYAY…KELVRRARLK (236 aa). 38–45 provides a ligand contact to ATP; sequence GSNGAGKS.

This sequence belongs to the ABC transporter superfamily. Energy-coupling factor EcfA family. As to quaternary structure, forms a stable energy-coupling factor (ECF) transporter complex composed of 2 membrane-embedded substrate-binding proteins (S component), 2 ATP-binding proteins (A component) and 2 transmembrane proteins (T component).

It is found in the cell membrane. Its function is as follows. ATP-binding (A) component of a common energy-coupling factor (ECF) ABC-transporter complex. Unlike classic ABC transporters this ECF transporter provides the energy necessary to transport a number of different substrates. This chain is Energy-coupling factor transporter ATP-binding protein EcfA2, found in Methanospirillum hungatei JF-1 (strain ATCC 27890 / DSM 864 / NBRC 100397 / JF-1).